A 116-amino-acid polypeptide reads, in one-letter code: Putative oxygen-evolving enhancer protein 1 (116 aa).

This sequence belongs to the PsbO family.

The protein resides in the plastid. It localises to the chloroplast thylakoid membrane. Stabilizes the manganese cluster which is the primary site of water splitting. The chain is Putative oxygen-evolving enhancer protein 1 from Pinus strobus (Eastern white pine).